A 218-amino-acid chain; its full sequence is Probable transaldolase (218 aa).

Catalysis depends on lysine 87, which acts as the Schiff-base intermediate with substrate.

The protein belongs to the transaldolase family. Type 3B subfamily.

The protein localises to the cytoplasm. It catalyses the reaction D-sedoheptulose 7-phosphate + D-glyceraldehyde 3-phosphate = D-erythrose 4-phosphate + beta-D-fructose 6-phosphate. Its pathway is carbohydrate degradation; pentose phosphate pathway; D-glyceraldehyde 3-phosphate and beta-D-fructose 6-phosphate from D-ribose 5-phosphate and D-xylulose 5-phosphate (non-oxidative stage): step 2/3. Functionally, transaldolase is important for the balance of metabolites in the pentose-phosphate pathway. In Cytophaga hutchinsonii (strain ATCC 33406 / DSM 1761 / CIP 103989 / NBRC 15051 / NCIMB 9469 / D465), this protein is Probable transaldolase.